The primary structure comprises 211 residues: ATP-dependent Clp protease proteolytic subunit (211 aa).

Ser-114 functions as the Nucleophile in the catalytic mechanism. The active site involves His-139.

This sequence belongs to the peptidase S14 family. As to quaternary structure, fourteen ClpP subunits assemble into 2 heptameric rings which stack back to back to give a disk-like structure with a central cavity, resembling the structure of eukaryotic proteasomes.

It localises to the cytoplasm. It catalyses the reaction Hydrolysis of proteins to small peptides in the presence of ATP and magnesium. alpha-casein is the usual test substrate. In the absence of ATP, only oligopeptides shorter than five residues are hydrolyzed (such as succinyl-Leu-Tyr-|-NHMec, and Leu-Tyr-Leu-|-Tyr-Trp, in which cleavage of the -Tyr-|-Leu- and -Tyr-|-Trp bonds also occurs).. In terms of biological role, cleaves peptides in various proteins in a process that requires ATP hydrolysis. Has a chymotrypsin-like activity. Plays a major role in the degradation of misfolded proteins. In Pseudomonas fluorescens (strain Pf0-1), this protein is ATP-dependent Clp protease proteolytic subunit.